Here is a 334-residue protein sequence, read N- to C-terminus: MTPLETKRPLQLNDQGQLQHFLSLDGLRRELLTEILDTADSFLEVGARAVKKVPLLRGKTVCNVFFENSTRTRTTFELAAQRLSADVITLNVSTSSASKGETLLDTLRNLEAMAADMFVVRHGDSGAAHFIAEHVCPQVAIINGGDGRHAHPTQGMLDMLTIRRHKGSFENLSVAIVGDILHSRVARSNMLALKTLGCPDIRVIAPKTLLPIGVEQYGVKVYTDMTEGLKDVDVVIMLRLQRERMTGGLLPSEGEFYRLFGLTTARLAGAKPDAIVMHPGPINRGVEIESAVADGPHSVILNQVTYGIAIRMAVLSMAMSGQTAQRQFDQENAQ.

Carbamoyl phosphate contacts are provided by Arg-71 and Thr-72. Position 99 (Lys-99) interacts with L-aspartate. Residues Arg-121, His-151, and Gln-154 each coordinate carbamoyl phosphate. Arg-184 and Arg-239 together coordinate L-aspartate. Positions 280 and 281 each coordinate carbamoyl phosphate.

Belongs to the aspartate/ornithine carbamoyltransferase superfamily. ATCase family. Heterododecamer (2C3:3R2) of six catalytic PyrB chains organized as two trimers (C3), and six regulatory PyrI chains organized as three dimers (R2).

It catalyses the reaction carbamoyl phosphate + L-aspartate = N-carbamoyl-L-aspartate + phosphate + H(+). It participates in pyrimidine metabolism; UMP biosynthesis via de novo pathway; (S)-dihydroorotate from bicarbonate: step 2/3. Its function is as follows. Catalyzes the condensation of carbamoyl phosphate and aspartate to form carbamoyl aspartate and inorganic phosphate, the committed step in the de novo pyrimidine nucleotide biosynthesis pathway. In Pseudomonas fluorescens biotype A, this protein is Aspartate carbamoyltransferase catalytic subunit.